Consider the following 332-residue polypeptide: Large ribosomal subunit protein uL29m (332 aa).

The interval 19–40 (RFTKPKPKPAKRENVRLPTQRT) is disordered. Residues 264–327 (TSENTESAIA…IQLQEEDAKN (64 aa)) are a coiled coil.

The protein belongs to the universal ribosomal protein uL29 family. As to quaternary structure, component of the mitochondrial large ribosomal subunit. Mature mitochondrial ribosomes consist of a small (37S) and a large (54S) subunit. The 37S subunit contains at least 33 different proteins and 1 molecule of RNA (15S). The 54S subunit contains at least 45 different proteins and 1 molecule of RNA (21S).

The protein resides in the mitochondrion. The chain is Large ribosomal subunit protein uL29m (MRPL4) from Kluyveromyces lactis (strain ATCC 8585 / CBS 2359 / DSM 70799 / NBRC 1267 / NRRL Y-1140 / WM37) (Yeast).